A 106-amino-acid chain; its full sequence is UPF0060 membrane protein Smed_0659 (106 aa).

3 consecutive transmembrane segments (helical) span residues 4 to 24 (FAIY…FWAW), 31 to 51 (GLWL…LTMV), and 61 to 81 (AAYG…AEGA).

Belongs to the UPF0060 family.

Its subcellular location is the cell inner membrane. This is UPF0060 membrane protein Smed_0659 from Sinorhizobium medicae (strain WSM419) (Ensifer medicae).